The sequence spans 130 residues: Small ribosomal subunit protein uS11 (130 aa).

The protein belongs to the universal ribosomal protein uS11 family. In terms of assembly, part of the 30S ribosomal subunit.

Located on the platform of the 30S subunit. This is Small ribosomal subunit protein uS11 from Ignicoccus hospitalis (strain KIN4/I / DSM 18386 / JCM 14125).